We begin with the raw amino-acid sequence, 488 residues long: 3-octaprenyl-4-hydroxybenzoate carboxy-lyase (488 aa).

Residue N172 coordinates Mn(2+). Prenylated FMN is bound by residues 175–177 (IYR), 189–191 (RWL), and 194–195 (RG). Position 238 (E238) interacts with Mn(2+). D287 serves as the catalytic Proton donor.

This sequence belongs to the UbiD family. In terms of assembly, homohexamer. The cofactor is prenylated FMN. It depends on Mn(2+) as a cofactor.

It is found in the cell membrane. It carries out the reaction a 4-hydroxy-3-(all-trans-polyprenyl)benzoate + H(+) = a 2-(all-trans-polyprenyl)phenol + CO2. Its pathway is cofactor biosynthesis; ubiquinone biosynthesis. Catalyzes the decarboxylation of 3-octaprenyl-4-hydroxy benzoate to 2-octaprenylphenol, an intermediate step in ubiquinone biosynthesis. This Pseudoalteromonas translucida (strain TAC 125) protein is 3-octaprenyl-4-hydroxybenzoate carboxy-lyase.